Reading from the N-terminus, the 448-residue chain is Iroquois-class homeodomain protein irx-3 (448 aa).

The segment at residues 108 to 170 (DPSRPKNATR…NARRRLKKEN (63 aa)) is a DNA-binding region (homeobox; TALE-type). Residues 171–247 (KMTWAPRSRT…EVSDGFEDLN (77 aa)) are disordered. Residues 195–222 (KHEDEEEIDLENIDTEDIESKEDLDDPD) show a composition bias toward acidic residues. A compositionally biased stretch (basic and acidic residues) spans 223–237 (TDIHSDSKTDTRSDS). Over residues 238–247 (EVSDGFEDLN) the composition is skewed to acidic residues.

This sequence belongs to the TALE/IRO homeobox family. In terms of tissue distribution, primarily expressed in the developing central nervous system (CNS). At gastrula stage, expressed in both the superficial and deep layers of the presumptive neural plate with expression spreading to the prospective hindbrain, spinal cord and midbrain-hindbrain junction as neurulation proceeds. Not expressed in the anterior neural plate and CNS expression in the tadpole excludes the forebrain. Outside of the CNS, expressed around the closing blastopore at early gastrula stages and as gastrulation proceeds, expression switches to the anterior lateral plate mesoderm. In tadpoles, expressed in the ectodermal layer of the branchial arches, and in the otic vesicle. Also expressed in specific and overlapping dynamic patterns with irx1 and irx2 during pronephric kidney development. Renal expression begins before segment-specific terminal differentiation in the pronephric anlage at mid-neurula stage, and is later found in proximal tubule PT3 as well as intermediate tubule segments IT1 and IT2, with expression in the kidney being maintained through to the tadpole stage.

Its subcellular location is the nucleus. In terms of biological role, acts partially redundantly with other irx members in neural patterning. Required for formation of the posterior forebrain, midbrain, hindbrain, and to a lesser extent, spinal cord. Both up-regulates and down-regulates gene expression during neural development. Acts early in neural plate development to induce proneural gene expression and specify a neural precursor state. Also up-regulates repressors that prevent neuronal differentiation. Required during at least two stages of pronephros kidney development; during neurula stages, maintains transcription of key renal genes to define the size and identity of the pronephric anlage, probably in part through regulation of bmp-signaling. Subsequently required for proper formation of the intermediate tubule segment of the pronephros. This chain is Iroquois-class homeodomain protein irx-3 (irx3), found in Xenopus laevis (African clawed frog).